A 214-amino-acid chain; its full sequence is Large ribosomal subunit protein uL3 (214 aa).

Residues 134-161 (THGNSLSHRAPGSIGQCQTPGRVMKGKK) are disordered. Glutamine 151 carries the post-translational modification N5-methylglutamine.

It belongs to the universal ribosomal protein uL3 family. As to quaternary structure, part of the 50S ribosomal subunit. Forms a cluster with proteins L14 and L19. Post-translationally, methylated by PrmB.

Its function is as follows. One of the primary rRNA binding proteins, it binds directly near the 3'-end of the 23S rRNA, where it nucleates assembly of the 50S subunit. The chain is Large ribosomal subunit protein uL3 from Teredinibacter turnerae (strain ATCC 39867 / T7901).